Reading from the N-terminus, the 362-residue chain is MSQVFKVAVLPGDGIGPEVMAEALRVLDAIEKKYDVKFERTHANVGGAGIDLEGKALPETTITICKTSDAILFGSVGGPKWETLPPDEQPERGALLPLRKIFGLYANLRPAIIFPSLTGASSLKEEVIAGGFNVLVIRELTGGIYFAQPKGIEGEGRDRVGFDTMRYSVPEIERITHVAFQAARKRGKKVCSIDKANVLSSSVLWREVVTGIAKEYPDVELSHMYVDNAAMQLVRWPKQFDVILCENMFGDILSDEAAMLTGSLGMLPSASLAEGTFGMYEPSGGSAPDIAGQGIANPIAQILSMGMMLRFSFGMVDAADAIDNAVAKVLDQGCRTRDIFQEKPGEKLVNTKEMGDAIIVAL.

An NAD(+)-binding site is contributed by 78 to 91 (GPKWETLPPDEQPE). Residues Arg99, Arg109, Arg138, and Asp227 each coordinate substrate. The Mg(2+) site is built by Asp227, Asp251, and Asp255. 285-297 (GSAPDIAGQGIAN) is a binding site for NAD(+).

Belongs to the isocitrate and isopropylmalate dehydrogenases family. LeuB type 1 subfamily. In terms of assembly, homodimer. The cofactor is Mg(2+). It depends on Mn(2+) as a cofactor.

The protein localises to the cytoplasm. It catalyses the reaction (2R,3S)-3-isopropylmalate + NAD(+) = 4-methyl-2-oxopentanoate + CO2 + NADH. It participates in amino-acid biosynthesis; L-leucine biosynthesis; L-leucine from 3-methyl-2-oxobutanoate: step 3/4. Its function is as follows. Catalyzes the oxidation of 3-carboxy-2-hydroxy-4-methylpentanoate (3-isopropylmalate) to 3-carboxy-4-methyl-2-oxopentanoate. The product decarboxylates to 4-methyl-2 oxopentanoate. This chain is 3-isopropylmalate dehydrogenase, found in Geobacter metallireducens (strain ATCC 53774 / DSM 7210 / GS-15).